A 305-amino-acid polypeptide reads, in one-letter code: Formamidopyrimidine-DNA glycosylase (305 aa).

The active-site Schiff-base intermediate with DNA is P2. The active-site Proton donor is the E3. The Proton donor; for beta-elimination activity role is filled by K59. Positions 92, 111, and 154 each coordinate DNA. The FPG-type zinc-finger motif lies at 239-273 (QVFDRAGEPCPVCGTPIRKVAVAQRGTHFCPRCQP). The active-site Proton donor; for delta-elimination activity is R263. The segment at 282–305 (PRRARPGRRGNSVRVAAEPPGTYE) is disordered.

This sequence belongs to the FPG family. As to quaternary structure, monomer. The cofactor is Zn(2+).

The enzyme catalyses Hydrolysis of DNA containing ring-opened 7-methylguanine residues, releasing 2,6-diamino-4-hydroxy-5-(N-methyl)formamidopyrimidine.. The catalysed reaction is 2'-deoxyribonucleotide-(2'-deoxyribose 5'-phosphate)-2'-deoxyribonucleotide-DNA = a 3'-end 2'-deoxyribonucleotide-(2,3-dehydro-2,3-deoxyribose 5'-phosphate)-DNA + a 5'-end 5'-phospho-2'-deoxyribonucleoside-DNA + H(+). Functionally, involved in base excision repair of DNA damaged by oxidation or by mutagenic agents. Acts as a DNA glycosylase that recognizes and removes damaged bases. Has a preference for oxidized purines, such as 7,8-dihydro-8-oxoguanine (8-oxoG). Has AP (apurinic/apyrimidinic) lyase activity and introduces nicks in the DNA strand. Cleaves the DNA backbone by beta-delta elimination to generate a single-strand break at the site of the removed base with both 3'- and 5'-phosphates. The sequence is that of Formamidopyrimidine-DNA glycosylase from Symbiobacterium thermophilum (strain DSM 24528 / JCM 14929 / IAM 14863 / T).